Here is a 118-residue protein sequence, read N- to C-terminus: Ribonuclease P protein component 2 (118 aa).

Belongs to the eukaryotic/archaeal RNase P protein component 2 family. Consists of a catalytic RNA component and at least 4-5 protein subunits.

It is found in the cytoplasm. It carries out the reaction Endonucleolytic cleavage of RNA, removing 5'-extranucleotides from tRNA precursor.. Functionally, part of ribonuclease P, a protein complex that generates mature tRNA molecules by cleaving their 5'-ends. This is Ribonuclease P protein component 2 from Pyrococcus abyssi (strain GE5 / Orsay).